We begin with the raw amino-acid sequence, 497 residues long: tRNA-2-methylthio-N(6)-dimethylallyladenosine synthase (497 aa).

A disordered region spans residues 1–50; sequence MTGTSNIPTHGKEHKDAPALLPLPAPNPHHTHAAHPGDPSHDRPPSRGKL. One can recognise an MTTase N-terminal domain in the interval 48 to 165; sequence GKLFIKTHGC…LPDMIRARRE (118 aa). [4Fe-4S] cluster contacts are provided by Cys-57, Cys-94, Cys-128, Cys-202, Cys-206, and Cys-209. One can recognise a Radical SAM core domain in the interval 188-430; sequence RAEGPSAFVS…QKHINAYAAD (243 aa). Residues 433-496 form the TRAM domain; sequence KRMIGTVQTV…TNSLRGRVHT (64 aa).

This sequence belongs to the methylthiotransferase family. MiaB subfamily. In terms of assembly, monomer. Requires [4Fe-4S] cluster as cofactor.

It localises to the cytoplasm. It catalyses the reaction N(6)-dimethylallyladenosine(37) in tRNA + (sulfur carrier)-SH + AH2 + 2 S-adenosyl-L-methionine = 2-methylsulfanyl-N(6)-dimethylallyladenosine(37) in tRNA + (sulfur carrier)-H + 5'-deoxyadenosine + L-methionine + A + S-adenosyl-L-homocysteine + 2 H(+). Catalyzes the methylthiolation of N6-(dimethylallyl)adenosine (i(6)A), leading to the formation of 2-methylthio-N6-(dimethylallyl)adenosine (ms(2)i(6)A) at position 37 in tRNAs that read codons beginning with uridine. The chain is tRNA-2-methylthio-N(6)-dimethylallyladenosine synthase from Xylella fastidiosa (strain M12).